The chain runs to 242 residues: Ribosomal RNA small subunit methyltransferase G (242 aa).

Residues glycine 78, phenylalanine 83, 129-130 (AE), and arginine 148 each bind S-adenosyl-L-methionine.

This sequence belongs to the methyltransferase superfamily. RNA methyltransferase RsmG family.

It is found in the cytoplasm. Specifically methylates the N7 position of a guanine in 16S rRNA. The polypeptide is Ribosomal RNA small subunit methyltransferase G (Lachnoclostridium phytofermentans (strain ATCC 700394 / DSM 18823 / ISDg) (Clostridium phytofermentans)).